The primary structure comprises 351 residues: METNYSIPLNGSDVVIYDSTISRVLWILSMVVVSITFFLGVLGNGLVIWVAGFRMPHTVTTIWYLNLALADFSFTATLPFLLVEMAMKEKWPFGWFLCKLVHIAVDVNLFGSVFLIAVIALDRCICVLHPVWAQNHRTVSLARNVVVGSWIFALILTLPLFLFLTTVRDARGDVHCRLSFVSWGNSVEERLNTAITFVTTRGIIRFIVSFSLPMSFVAICYGLITTKIHKKAFVNSSRPFRVLTGVVASFFICWFPFQLVALLGTVWLKEMQFSGSYKIIGRLVNPTSSLAFFNSCLNPILYVFMGQDFQERLIHSLSSRLQRALSEDSGHISDTRTNLASLPEDIEIKAI.

The Extracellular segment spans residues Met1–Ile27. N-linked (GlcNAc...) asparagine glycans are attached at residues Asn4 and Asn10. The helical transmembrane segment at Leu28 to Val50 threads the bilayer. The Cytoplasmic portion of the chain corresponds to Ala51–Thr61. Residues Ile62–Val83 form a helical membrane-spanning segment. The Extracellular segment spans residues Glu84 to Leu100. Cysteines 98 and 176 form a disulfide. Residues Val101 to Leu121 traverse the membrane as a helical segment. At Asp122–Ser140 the chain is on the cytoplasmic side. Residues Leu141–Leu162 form a helical membrane-spanning segment. At Phe163 to Arg205 the chain is on the extracellular side. A helical membrane pass occupies residues Phe206 to Thr226. Topologically, residues Lys227 to Val242 are cytoplasmic. Residues Leu243–Val266 traverse the membrane as a helical segment. Residues Trp267 to Pro286 are Extracellular-facing. The helical transmembrane segment at Thr287–Gly306 threads the bilayer. Over Gln307–Ile351 the chain is Cytoplasmic.

It belongs to the G-protein coupled receptor 1 family. In terms of tissue distribution, expressed exclusively in vomeronasal neurons. Expressed in 0.6 % of a subset of sensory neurons located in the basal layer of the vomeronasal organ. Each neuron appears to express only one receptor gene. Expressed mostly in neutrophils, followed by spleen and lung and expressed at very low levels in heart and liver.

The protein localises to the cell membrane. Its function is as follows. Low affinity receptor for N-formyl-methionyl peptides. Receptor for lipoxin A4. May have an olfactory function associated with the identification of pathogens or of pathogenic states. In Mus musculus (Mouse), this protein is Formyl peptide receptor-related sequence 1 (Fpr-s1).